A 310-amino-acid polypeptide reads, in one-letter code: HTH-type transcriptional regulator PunR (310 aa).

In terms of domain architecture, HTH lysR-type spans 2-59 (WSEYSLEVVDAVARNGSFSAAAQELHRVPSAVSYTVRQLEEWLAVPLFERRHRDVELT). The H-T-H motif DNA-binding region spans 19 to 38 (FSAAAQELHRVPSAVSYTVR).

Belongs to the LysR transcriptional regulatory family.

It localises to the cytoplasm. Functionally, transcriptional regulator that activates the expression of punC, which encodes a purine nucleoside transporter. The protein is HTH-type transcriptional regulator PunR of Escherichia coli O157:H7.